The sequence spans 421 residues: CinA-like protein (421 aa).

The protein belongs to the CinA family.

The polypeptide is CinA-like protein (Synechococcus elongatus (strain ATCC 33912 / PCC 7942 / FACHB-805) (Anacystis nidulans R2)).